We begin with the raw amino-acid sequence, 394 residues long: 1-deoxy-D-xylulose 5-phosphate reductoisomerase (394 aa).

Positions 12, 13, 14, 15, 38, 41, and 132 each coordinate NADPH. Lys-133 serves as a coordination point for 1-deoxy-D-xylulose 5-phosphate. Glu-134 contributes to the NADPH binding site. Asp-156 serves as a coordination point for Mn(2+). 4 residues coordinate 1-deoxy-D-xylulose 5-phosphate: Ser-157, Glu-158, Ser-182, and His-205. Mn(2+) is bound at residue Glu-158. Gly-211 is a binding site for NADPH. 1-deoxy-D-xylulose 5-phosphate is bound by residues Ser-218, Asn-223, Lys-224, and Glu-227. Glu-227 contacts Mn(2+).

Belongs to the DXR family. Requires Mg(2+) as cofactor. It depends on Mn(2+) as a cofactor.

It catalyses the reaction 2-C-methyl-D-erythritol 4-phosphate + NADP(+) = 1-deoxy-D-xylulose 5-phosphate + NADPH + H(+). It participates in isoprenoid biosynthesis; isopentenyl diphosphate biosynthesis via DXP pathway; isopentenyl diphosphate from 1-deoxy-D-xylulose 5-phosphate: step 1/6. Its function is as follows. Catalyzes the NADPH-dependent rearrangement and reduction of 1-deoxy-D-xylulose-5-phosphate (DXP) to 2-C-methyl-D-erythritol 4-phosphate (MEP). This is 1-deoxy-D-xylulose 5-phosphate reductoisomerase from Arthrobacter sp. (strain FB24).